Here is a 357-residue protein sequence, read N- to C-terminus: Glucose-6-phosphatase catalytic subunit 1 (357 aa).

At M1–D28 the chain is on the lumenal side. A helical membrane pass occupies residues W29–I49. The Cytoplasmic segment spans residues W50–N60. The helical transmembrane segment at L61 to G81 threads the bilayer. The Lumenal portion of the chain corresponds to Q82–S117. R83 contacts substrate. N96 carries N-linked (GlcNAc...) asparagine glycosylation. The chain crosses the membrane as a helical span at residues G118–F138. The active-site Proton donor is H119. Residues R139–G147 lie on the Cytoplasmic side of the membrane. Residues F148–L168 traverse the membrane as a helical segment. The Lumenal segment spans residues S169–H179. Residue R170 participates in substrate binding. The Nucleophile role is filled by H176. A helical transmembrane segment spans residues Q180–Y202. Over N203 to L211 the chain is Cytoplasmic. The chain crosses the membrane as a helical span at residues I212–V232. Over D233–D254 the chain is Lumenal. A helical membrane pass occupies residues T255–L275. At N276 to L291 the chain is on the cytoplasmic side. A helical transmembrane segment spans residues L292–L312. At K313 to L320 the chain is on the lumenal side. Residues I321–I341 traverse the membrane as a helical segment. Topologically, residues P342–L357 are cytoplasmic. Residues K354–L357 carry the Prevents secretion from ER motif.

Belongs to the glucose-6-phosphatase family. In terms of tissue distribution, liver and kidney.

The protein localises to the endoplasmic reticulum membrane. It catalyses the reaction D-glucose 6-phosphate + H2O = D-glucose + phosphate. It participates in carbohydrate biosynthesis; gluconeogenesis. Its function is as follows. Hydrolyzes glucose-6-phosphate to glucose in the endoplasmic reticulum. Forms with the glucose-6-phosphate transporter (SLC37A4/G6PT) the complex responsible for glucose production in the terminal step of glycogenolysis and gluconeogenesis. Hence, it is the key enzyme in homeostatic regulation of blood glucose levels. In Mus musculus (Mouse), this protein is Glucose-6-phosphatase catalytic subunit 1 (G6pc1).